Here is a 380-residue protein sequence, read N- to C-terminus: DNA replication and repair protein RecF (380 aa).

30–37 (GPNGFGKT) is a binding site for ATP.

The protein belongs to the RecF family.

Its subcellular location is the cytoplasm. Functionally, the RecF protein is involved in DNA metabolism; it is required for DNA replication and normal SOS inducibility. RecF binds preferentially to single-stranded, linear DNA. It also seems to bind ATP. In Mycobacterium sp. (strain KMS), this protein is DNA replication and repair protein RecF.